The sequence spans 78 residues: Acyl carrier protein (78 aa).

The 76-residue stretch at 2-77 (SSIEERVKKI…QATSYVEANL (76 aa)) folds into the Carrier domain. Ser-37 carries the post-translational modification O-(pantetheine 4'-phosphoryl)serine.

It belongs to the acyl carrier protein (ACP) family. 4'-phosphopantetheine is transferred from CoA to a specific serine of apo-ACP by AcpS. This modification is essential for activity because fatty acids are bound in thioester linkage to the sulfhydryl of the prosthetic group.

The protein localises to the cytoplasm. The protein operates within lipid metabolism; fatty acid biosynthesis. Carrier of the growing fatty acid chain in fatty acid biosynthesis. The polypeptide is Acyl carrier protein (Hydrogenovibrio crunogenus (strain DSM 25203 / XCL-2) (Thiomicrospira crunogena)).